The chain runs to 309 residues: Carbamate kinase (309 aa).

It belongs to the carbamate kinase family.

The protein resides in the cytoplasm. The enzyme catalyses hydrogencarbonate + NH4(+) + ATP = carbamoyl phosphate + ADP + H2O + H(+). It participates in metabolic intermediate metabolism; carbamoyl phosphate degradation; CO(2) and NH(3) from carbamoyl phosphate: step 1/1. This Staphylococcus haemolyticus (strain JCSC1435) protein is Carbamate kinase (arcC).